Here is a 422-residue protein sequence, read N- to C-terminus: 26S proteasome non-ATPase regulatory subunit 11B (422 aa).

The PCI domain maps to 228 to 392; it reads AYSYFFEAFE…DVLIIFEEPP (165 aa).

Belongs to the proteasome subunit S9 family. As to quaternary structure, component of the lid subcomplex of the 19S proteasome regulatory particle complex (also named PA700 complex). The 26S proteasome consists of a 20S proteasome core and two 19S regulatory subunits.

The protein resides in the nucleus. The protein localises to the cytoplasm. It localises to the cytosol. Its function is as follows. Component of the lid subcomplex of the 26S proteasome, a multiprotein complex involved in the ATP-dependent degradation of ubiquitinated proteins. In the complex, psmd11b is required for proteasome assembly. This Danio rerio (Zebrafish) protein is 26S proteasome non-ATPase regulatory subunit 11B (psmd11b).